Here is a 337-residue protein sequence, read N- to C-terminus: DNA-directed RNA polymerase subunit alpha (337 aa).

The tract at residues 1–233 (MVREKVTVST…DLFIPFLHME (233 aa)) is alpha N-terminal domain (alpha-NTD). The interval 265–337 (KKIALKSIFI…FVIDLAKNKF (73 aa)) is alpha C-terminal domain (alpha-CTD).

This sequence belongs to the RNA polymerase alpha chain family. As to quaternary structure, in plastids the minimal PEP RNA polymerase catalytic core is composed of four subunits: alpha, beta, beta', and beta''. When a (nuclear-encoded) sigma factor is associated with the core the holoenzyme is formed, which can initiate transcription.

Its subcellular location is the plastid. The protein localises to the chloroplast. The enzyme catalyses RNA(n) + a ribonucleoside 5'-triphosphate = RNA(n+1) + diphosphate. Functionally, DNA-dependent RNA polymerase catalyzes the transcription of DNA into RNA using the four ribonucleoside triphosphates as substrates. The chain is DNA-directed RNA polymerase subunit alpha from Nicotiana sylvestris (Wood tobacco).